The chain runs to 335 residues: Olfactory receptor 10R2 (335 aa).

Residues 1–45 (MPQILIFTYLNMFYFFPPLQILAENLTMVTEFLLLGFSSLGEIQL) are Extracellular-facing. Residue Asn-25 is glycosylated (N-linked (GlcNAc...) asparagine). The chain crosses the membrane as a helical span at residues 46–66 (ALFVVFLFLYLVILSGNVTII). The Cytoplasmic portion of the chain corresponds to 67-74 (SVIHLDKS). A helical transmembrane segment spans residues 75–95 (LHTPMYFFLGILSTSETFYTF). Residues 96–119 (VILPKMLINLLSVARTISFNCCAL) are Extracellular-facing. A disulfide bridge connects residues Cys-117 and Cys-209. The helical transmembrane segment at 120-140 (QMFFFLGFAITNCLLLGVMGY) threads the bilayer. Topologically, residues 141–159 (DRYAAICHPLHYPTLMSWQ) are cytoplasmic. Residues 160–180 (VCGKLAAACAIGGFLASLTVV) traverse the membrane as a helical segment. Topologically, residues 181–217 (NLVFSLPFCSANKVNHYFCDISAVILLACTNTDVNEF) are extracellular. The chain crosses the membrane as a helical span at residues 218 to 237 (VIFICGVLVLVVPFLFICVS). Residues 238–257 (YLCILRTILKIPSAEGRRKA) are Cytoplasmic-facing. A helical transmembrane segment spans residues 258-278 (FSTCASHLSVVIVHYGCASFI). The Extracellular portion of the chain corresponds to 279-291 (YLRPTANYVSNKD). The helical transmembrane segment at 292–312 (RLVTVTYTIVTPLLNPMVYSL) threads the bilayer. The Cytoplasmic segment spans residues 313 to 335 (RNKDVQLAIRKVLGKKGSLKLYN).

Belongs to the G-protein coupled receptor 1 family.

It localises to the cell membrane. Its function is as follows. Odorant receptor. This chain is Olfactory receptor 10R2 (OR10R2), found in Homo sapiens (Human).